A 261-amino-acid chain; its full sequence is U1 small nuclear ribonucleoprotein 70 kDa homolog (261 aa).

The region spanning 100–178 is the RRM domain; sequence KTMFLSRLSY…RRIVVDVERG (79 aa). Residues 192–261 form a disordered region; that stretch reads GLGGRHYTKE…DSSPKRRRYN (70 aa). The span at 198–215 shows a compositional bias: basic and acidic residues; sequence YTKERPRRERGSRFRGDS. Residues 216–235 are compositionally biased toward gly residues; that stretch reads GFRGGYRGGFRKSSGGGSRF.

Component of the spliceosome, where it is associated with snRNP U1. Associates with U1 snRNA.

Its subcellular location is the nucleus. Involved in nuclear mRNA splicing. Essential for growth. The sequence is that of U1 small nuclear ribonucleoprotein 70 kDa homolog from Schizosaccharomyces pombe (strain 972 / ATCC 24843) (Fission yeast).